A 249-amino-acid polypeptide reads, in one-letter code: Acetylglutamate kinase (249 aa).

Substrate-binding positions include 42–43 (GG), Arg64, and Asn155.

This sequence belongs to the acetylglutamate kinase family. ArgB subfamily.

It is found in the cytoplasm. The catalysed reaction is N-acetyl-L-glutamate + ATP = N-acetyl-L-glutamyl 5-phosphate + ADP. Its pathway is amino-acid biosynthesis; L-arginine biosynthesis; N(2)-acetyl-L-ornithine from L-glutamate: step 2/4. Its function is as follows. Catalyzes the ATP-dependent phosphorylation of N-acetyl-L-glutamate. This chain is Acetylglutamate kinase, found in Endomicrobium trichonymphae.